Here is a 274-residue protein sequence, read N- to C-terminus: Ribosomal RNA small subunit methyltransferase A (274 aa).

S-adenosyl-L-methionine is bound by residues Asn27, Leu29, Gly54, Glu75, Asp100, and Asn121.

This sequence belongs to the class I-like SAM-binding methyltransferase superfamily. rRNA adenine N(6)-methyltransferase family. RsmA subfamily.

It localises to the cytoplasm. The enzyme catalyses adenosine(1518)/adenosine(1519) in 16S rRNA + 4 S-adenosyl-L-methionine = N(6)-dimethyladenosine(1518)/N(6)-dimethyladenosine(1519) in 16S rRNA + 4 S-adenosyl-L-homocysteine + 4 H(+). Its function is as follows. Specifically dimethylates two adjacent adenosines (A1518 and A1519) in the loop of a conserved hairpin near the 3'-end of 16S rRNA in the 30S particle. May play a critical role in biogenesis of 30S subunits. The polypeptide is Ribosomal RNA small subunit methyltransferase A (Acinetobacter baylyi (strain ATCC 33305 / BD413 / ADP1)).